Here is an 830-residue protein sequence, read N- to C-terminus: Beta-glucosidase A (830 aa).

Aspartate 769 is a catalytic residue.

Belongs to the glycosyl hydrolase 3 family.

The enzyme catalyses Hydrolysis of terminal, non-reducing beta-D-glucosyl residues with release of beta-D-glucose.. Its function is as follows. B.fibrisolvens beta-glucosidase hydrolyzes cellobiose to a limited extent, cellotriose to cellobiose and glucose, and cellotetraose and cellopentaose to predominantly glucose. This Butyrivibrio fibrisolvens protein is Beta-glucosidase A (bglA).